A 314-amino-acid chain; its full sequence is tRNA dimethylallyltransferase (314 aa).

Residue 10–17 (GPTGVGKT) participates in ATP binding. 12-17 (TGVGKT) provides a ligand contact to substrate. The tract at residues 35–38 (DSMQ) is interaction with substrate tRNA.

The protein belongs to the IPP transferase family. Monomer. Requires Mg(2+) as cofactor.

The enzyme catalyses adenosine(37) in tRNA + dimethylallyl diphosphate = N(6)-dimethylallyladenosine(37) in tRNA + diphosphate. Its function is as follows. Catalyzes the transfer of a dimethylallyl group onto the adenine at position 37 in tRNAs that read codons beginning with uridine, leading to the formation of N6-(dimethylallyl)adenosine (i(6)A). This chain is tRNA dimethylallyltransferase, found in Finegoldia magna (strain ATCC 29328 / DSM 20472 / WAL 2508) (Peptostreptococcus magnus).